The primary structure comprises 110 residues: UPF0060 membrane protein ASA_2267 (110 aa).

4 helical membrane-spanning segments follow: residues 7–27 (IGLF…PYLW), 33–53 (SVWL…LLSL), 63–83 (AAYG…VDGI), and 87–107 (LWDL…MFAP).

This sequence belongs to the UPF0060 family.

It is found in the cell inner membrane. The polypeptide is UPF0060 membrane protein ASA_2267 (Aeromonas salmonicida (strain A449)).